A 386-amino-acid polypeptide reads, in one-letter code: Heat-inducible transcription repressor HrcA (386 aa).

The protein belongs to the HrcA family.

Negative regulator of class I heat shock genes (grpE-dnaK-dnaJ and groELS operons). Prevents heat-shock induction of these operons. The protein is Heat-inducible transcription repressor HrcA of Chlamydia abortus (strain DSM 27085 / S26/3) (Chlamydophila abortus).